The sequence spans 809 residues: Lon protease (809 aa).

A Lon N-terminal domain is found at 20-216; it reads LPLLALRDVV…ELMNYLMNQS (197 aa). 369–376 serves as a coordination point for ATP; that stretch reads GPPGVGKT. The Lon proteolytic domain maps to 606-787; sequence EAQVGRVNGL…DEILPLALTS (182 aa). Catalysis depends on residues S693 and K736.

It belongs to the peptidase S16 family. Homohexamer. Organized in a ring with a central cavity.

It is found in the cytoplasm. It catalyses the reaction Hydrolysis of proteins in presence of ATP.. Its function is as follows. ATP-dependent serine protease that mediates the selective degradation of mutant and abnormal proteins as well as certain short-lived regulatory proteins. Required for cellular homeostasis and for survival from DNA damage and developmental changes induced by stress. Degrades polypeptides processively to yield small peptide fragments that are 5 to 10 amino acids long. Binds to DNA in a double-stranded, site-specific manner. This Acinetobacter baumannii (strain AB307-0294) protein is Lon protease.